A 186-amino-acid polypeptide reads, in one-letter code: Large ribosomal subunit protein eL15 (186 aa).

The segment at 163–186 (RGLTSAGKKGRGLNKKGKGAEKVR) is disordered. Over residues 170–179 (KKGRGLNKKG) the composition is skewed to basic residues.

The protein belongs to the eukaryotic ribosomal protein eL15 family.

In Methanosphaera stadtmanae (strain ATCC 43021 / DSM 3091 / JCM 11832 / MCB-3), this protein is Large ribosomal subunit protein eL15.